A 214-amino-acid chain; its full sequence is High frequency lysogenization protein HflD homolog (214 aa).

Belongs to the HflD family.

Its subcellular location is the cytoplasm. It localises to the cell inner membrane. This chain is High frequency lysogenization protein HflD homolog, found in Chromohalobacter salexigens (strain ATCC BAA-138 / DSM 3043 / CIP 106854 / NCIMB 13768 / 1H11).